The chain runs to 461 residues: Tumor necrosis factor receptor superfamily member 1A (461 aa).

The first 29 residues, 1–29 (MGLPIVPGLLLSLVLLALLMGIHPSGVTG), serve as a signal peptide directing secretion. Over 30–211 (LVPSLGDREK…VTNPQDSGTA (182 aa)) the chain is Extracellular. 4 TNFR-Cys repeats span residues 43 to 82 (LCPQ…TVCE), 83 to 125 (VCDK…DTVC), 126 to 166 (GCKK…NTVC), and 167 to 196 (NCHA…KLCL). 12 cysteine pairs are disulfide-bonded: cysteine 44/cysteine 58, cysteine 59/cysteine 72, cysteine 62/cysteine 81, cysteine 84/cysteine 99, cysteine 102/cysteine 117, cysteine 105/cysteine 125, cysteine 127/cysteine 143, cysteine 146/cysteine 158, cysteine 149/cysteine 166, cysteine 168/cysteine 179, cysteine 182/cysteine 195, and cysteine 185/cysteine 191. A glycan (N-linked (GlcNAc...) asparagine) is linked at asparagine 54. An N-linked (GlcNAc...) asparagine glycan is attached at asparagine 151. Asparagine 201 is a glycosylation site (N-linked (GlcNAc...) asparagine). A helical membrane pass occupies residues 212–234 (VLLPLVIFLGLCLLFFICISLLC). The Cytoplasmic portion of the chain corresponds to 235-461 (RYPQWRPRVY…AHSSTTHLPR (227 aa)). The segment at 344 to 354 (VRKWEDVVAAQ) is N-SMase activation domain (NSD). A Death domain is found at 363–448 (PAMLYAVVDG…GCLENIRETL (86 aa)).

In terms of assembly, binding of TNF to the extracellular domain leads to homotrimerization. The aggregated death domains provide a novel molecular interface that interacts specifically with the death domain of TRADD. Various TRADD-interacting proteins such as TRAFS, RIPK1 and possibly FADD, are recruited to the complex by their association with TRADD. This complex activates at least two distinct signaling cascades, apoptosis and NF-kappa-B signaling. Interacts with BAG4, BABAM2, FEM1B, GRB2, SQSTM1 and TRPC4AP. Interacts with DAB2IP. Interacts directly with NOL3 (via CARD domain); inhibits TNF-signaling pathway. Interacts with SH3RF2, TRADD and RIPK1. SH3RF2 facilitates the recruitment of RIPK1 and TRADD to TNFRSF1A in a TNF-alpha-dependent process. Interacts with PGLYRP1; this interaction is important for cell death induction. Interacts (via death domain) with MADD (via death domain).

The protein resides in the cell membrane. Its subcellular location is the golgi apparatus membrane. Functionally, receptor for TNFSF2/TNF-alpha and homotrimeric TNFSF1/lymphotoxin-alpha. The adapter molecule FADD recruits caspase-8 to the activated receptor. The resulting death-inducing signaling complex (DISC) performs caspase-8 proteolytic activation which initiates the subsequent cascade of caspases (aspartate-specific cysteine proteases) mediating apoptosis. In Rattus norvegicus (Rat), this protein is Tumor necrosis factor receptor superfamily member 1A (Tnfrsf1a).